The following is a 1272-amino-acid chain: Ubiquitin carboxyl-terminal hydrolase 2 (1272 aa).

Positions 736–1258 (TGINNIGNTC…TPYFLVYVKQ (523 aa)) constitute a USP domain. Cys745 serves as the catalytic Nucleophile. The interval 884–918 (DGLNGDVGTDANRKKNESNDAEVSENEDTTGLTSP) is disordered. The span at 902–911 (NDAEVSENED) shows a compositional bias: acidic residues. Ser907 carries the post-translational modification Phosphoserine. His1209 serves as the catalytic Proton acceptor.

The protein belongs to the peptidase C19 family. Forms a ternary complex with RSP5 and RUP1. Interacts with RSP5. Interacts with FZO1.

It carries out the reaction Thiol-dependent hydrolysis of ester, thioester, amide, peptide and isopeptide bonds formed by the C-terminal Gly of ubiquitin (a 76-residue protein attached to proteins as an intracellular targeting signal).. Its function is as follows. Has an ATP-independent isopeptidase activity, cleaving at the C-terminus of the ubiquitin moiety in natural or engineered linear fusion proteins, irrespective of their size or the presence of an N-terminal extension to ubiquitin. Hydrolyzes polyubiquitinated 'Lys-63' polyubiquitin chains in RPO21, producing mono-ubiquitinated RNA polymerase II. Removes ubiquitin chains that initiate proteolysis of FZO1 and inhibit mitochondrial fusion. This chain is Ubiquitin carboxyl-terminal hydrolase 2 (UBP2), found in Saccharomyces cerevisiae (strain ATCC 204508 / S288c) (Baker's yeast).